Reading from the N-terminus, the 287-residue chain is 4-hydroxybenzoate octaprenyltransferase (287 aa).

The next 9 helical transmembrane spans lie at 21-41 (VGIF…AKGA), 44-64 (FKIA…GCIV), 91-111 (VTEA…LVLL), 112-132 (LNRL…VYPF), 139-159 (LPQL…FAAT), 160-180 (VGHV…WPIV), 211-231 (LMIG…GWYL), 235-255 (YWFY…QFLI), and 263-283 (CFAA…GILL).

Belongs to the UbiA prenyltransferase family. The cofactor is Mg(2+).

The protein resides in the cell inner membrane. The catalysed reaction is all-trans-octaprenyl diphosphate + 4-hydroxybenzoate = 4-hydroxy-3-(all-trans-octaprenyl)benzoate + diphosphate. It participates in cofactor biosynthesis; ubiquinone biosynthesis. Catalyzes the prenylation of para-hydroxybenzoate (PHB) with an all-trans polyprenyl group. Mediates the second step in the final reaction sequence of ubiquinone-8 (UQ-8) biosynthesis, which is the condensation of the polyisoprenoid side chain with PHB, generating the first membrane-bound Q intermediate 3-octaprenyl-4-hydroxybenzoate. This is 4-hydroxybenzoate octaprenyltransferase from Coxiella burnetii (strain CbuK_Q154) (Coxiella burnetii (strain Q154)).